A 585-amino-acid chain; its full sequence is Pyruvate kinase (585 aa).

Arg32 contributes to the substrate binding site. K(+)-binding residues include Asn34, Ser36, Asp66, and Thr67. Residue 34–37 coordinates ATP; sequence NFSH. Arg73 and Lys156 together coordinate ATP. Glu221 provides a ligand contact to Mg(2+). Positions 244, 245, and 277 each coordinate substrate. Asp245 serves as a coordination point for Mg(2+).

This sequence belongs to the pyruvate kinase family. In the C-terminal section; belongs to the PEP-utilizing enzyme family. The cofactor is Mg(2+). K(+) serves as cofactor.

It carries out the reaction pyruvate + ATP = phosphoenolpyruvate + ADP + H(+). It participates in carbohydrate degradation; glycolysis; pyruvate from D-glyceraldehyde 3-phosphate: step 5/5. The chain is Pyruvate kinase (pyk) from Staphylococcus epidermidis (strain ATCC 35984 / DSM 28319 / BCRC 17069 / CCUG 31568 / BM 3577 / RP62A).